The primary structure comprises 238 residues: Orotidine 5'-phosphate decarboxylase (238 aa).

Residues Asp10, Lys32, 59-68 (DLKLHDIPNT), Thr122, Arg184, Gln193, Gly213, and Arg214 each bind substrate. Catalysis depends on Lys61, which acts as the Proton donor.

Belongs to the OMP decarboxylase family. Type 1 subfamily. In terms of assembly, homodimer.

It catalyses the reaction orotidine 5'-phosphate + H(+) = UMP + CO2. It participates in pyrimidine metabolism; UMP biosynthesis via de novo pathway; UMP from orotate: step 2/2. Its function is as follows. Catalyzes the decarboxylation of orotidine 5'-monophosphate (OMP) to uridine 5'-monophosphate (UMP). The polypeptide is Orotidine 5'-phosphate decarboxylase (Bacillus cereus (strain AH820)).